We begin with the raw amino-acid sequence, 322 residues long: 4-diphosphocytidyl-2-C-methyl-D-erythritol kinase (322 aa).

The active site involves Lys-25. Position 110-120 (Pro-110–Ala-120) interacts with ATP. Residue Asp-152 is part of the active site.

The protein belongs to the GHMP kinase family. IspE subfamily.

It catalyses the reaction 4-CDP-2-C-methyl-D-erythritol + ATP = 4-CDP-2-C-methyl-D-erythritol 2-phosphate + ADP + H(+). Its pathway is isoprenoid biosynthesis; isopentenyl diphosphate biosynthesis via DXP pathway; isopentenyl diphosphate from 1-deoxy-D-xylulose 5-phosphate: step 3/6. Its function is as follows. Catalyzes the phosphorylation of the position 2 hydroxy group of 4-diphosphocytidyl-2C-methyl-D-erythritol. The protein is 4-diphosphocytidyl-2-C-methyl-D-erythritol kinase of Mycolicibacterium vanbaalenii (strain DSM 7251 / JCM 13017 / BCRC 16820 / KCTC 9966 / NRRL B-24157 / PYR-1) (Mycobacterium vanbaalenii).